The sequence spans 72 residues: NAD(P)H-quinone oxidoreductase subunit O (72 aa).

Belongs to the complex I NdhO subunit family. In terms of assembly, NDH-1 can be composed of about 15 different subunits; different subcomplexes with different compositions have been identified which probably have different functions.

It localises to the cellular thylakoid membrane. It carries out the reaction a plastoquinone + NADH + (n+1) H(+)(in) = a plastoquinol + NAD(+) + n H(+)(out). The enzyme catalyses a plastoquinone + NADPH + (n+1) H(+)(in) = a plastoquinol + NADP(+) + n H(+)(out). NDH-1 shuttles electrons from an unknown electron donor, via FMN and iron-sulfur (Fe-S) centers, to quinones in the respiratory and/or the photosynthetic chain. The immediate electron acceptor for the enzyme in this species is believed to be plastoquinone. Couples the redox reaction to proton translocation, and thus conserves the redox energy in a proton gradient. Cyanobacterial NDH-1 also plays a role in inorganic carbon-concentration. This is NAD(P)H-quinone oxidoreductase subunit O from Crocosphaera subtropica (strain ATCC 51142 / BH68) (Cyanothece sp. (strain ATCC 51142)).